Here is a 411-residue protein sequence, read N- to C-terminus: Citrate synthase (411 aa).

Active-site residues include His304 and Asp363.

Belongs to the citrate synthase family.

It catalyses the reaction oxaloacetate + acetyl-CoA + H2O = citrate + CoA + H(+). The protein operates within carbohydrate metabolism; tricarboxylic acid cycle; isocitrate from oxaloacetate: step 1/2. In Rickettsia parkeri, this protein is Citrate synthase (gltA).